A 734-amino-acid polypeptide reads, in one-letter code: Photosystem I P700 chlorophyll a apoprotein A2 (734 aa).

Helical transmembrane passes span isoleucine 46–alanine 69, leucine 135–glutamine 158, leucine 175–isoleucine 199, isoleucine 273–tyrosine 291, leucine 330–tyrosine 353, alanine 369–isoleucine 395, alanine 417–histidine 439, and phenylalanine 517–valine 535. Positions 559 and 568 each coordinate [4Fe-4S] cluster. The next 2 helical transmembrane spans lie at alanine 575–tryptophan 596 and leucine 643–isoleucine 665. Chlorophyll a contacts are provided by histidine 654, methionine 662, and tyrosine 670. Tryptophan 671 contributes to the phylloquinone binding site. A helical membrane pass occupies residues leucine 707–alanine 727.

The protein belongs to the PsaA/PsaB family. In terms of assembly, the PsaA/B heterodimer binds the P700 chlorophyll special pair and subsequent electron acceptors. PSI consists of a core antenna complex that captures photons, and an electron transfer chain that converts photonic excitation into a charge separation. The eukaryotic PSI reaction center is composed of at least 11 subunits. P700 is a chlorophyll a/chlorophyll a' dimer, A0 is one or more chlorophyll a, A1 is one or both phylloquinones and FX is a shared 4Fe-4S iron-sulfur center. is required as a cofactor.

Its subcellular location is the plastid. The protein resides in the chloroplast thylakoid membrane. The catalysed reaction is reduced [plastocyanin] + hnu + oxidized [2Fe-2S]-[ferredoxin] = oxidized [plastocyanin] + reduced [2Fe-2S]-[ferredoxin]. Functionally, psaA and PsaB bind P700, the primary electron donor of photosystem I (PSI), as well as the electron acceptors A0, A1 and FX. PSI is a plastocyanin-ferredoxin oxidoreductase, converting photonic excitation into a charge separation, which transfers an electron from the donor P700 chlorophyll pair to the spectroscopically characterized acceptors A0, A1, FX, FA and FB in turn. Oxidized P700 is reduced on the lumenal side of the thylakoid membrane by plastocyanin. The polypeptide is Photosystem I P700 chlorophyll a apoprotein A2 (Nicotiana tomentosiformis (Tobacco)).